Here is a 284-residue protein sequence, read N- to C-terminus: 4-diphosphocytidyl-2-C-methyl-D-erythritol kinase (284 aa).

K14 is an active-site residue. ATP is bound at residue 98-108; the sequence is PMGGGLGGGSS. D140 is an active-site residue.

This sequence belongs to the GHMP kinase family. IspE subfamily.

It catalyses the reaction 4-CDP-2-C-methyl-D-erythritol + ATP = 4-CDP-2-C-methyl-D-erythritol 2-phosphate + ADP + H(+). The protein operates within isoprenoid biosynthesis; isopentenyl diphosphate biosynthesis via DXP pathway; isopentenyl diphosphate from 1-deoxy-D-xylulose 5-phosphate: step 3/6. Catalyzes the phosphorylation of the position 2 hydroxy group of 4-diphosphocytidyl-2C-methyl-D-erythritol. In Shewanella pealeana (strain ATCC 700345 / ANG-SQ1), this protein is 4-diphosphocytidyl-2-C-methyl-D-erythritol kinase.